The sequence spans 807 residues: Shutoff protein (807 aa).

The segment at 1-88 (MESVEKKDSL…QVGRGDERHG (88 aa)) is disordered. The segment covering 16-29 (FATTASTDAANAPT) has biased composition (polar residues). Composition is skewed to basic and acidic residues over residues 59 to 70 (RSVPTEDKKQDQ) and 79 to 88 (QVGRGDERHG). The binding to host EIF4G stretch occupies residues 280 to 345 (VMSELIVRRA…AVLVTVELEC (66 aa)). Residues 348–466 (RFFADPEMQR…DLWTAFNERS (119 aa)) enclose the RRM domain. Residues Tyr365 and Tyr682 each carry the phosphotyrosine; by host modification. The disordered stretch occupies residues 684–807 (DPQSGEELNP…AGTARSPTQP (124 aa)). A compositionally biased stretch (gly residues) spans 726 to 743 (GRGGILGQSGRGGFGRGG). Residues 744 to 755 (GGHDGRLGEPRR) show a composition bias toward basic and acidic residues. Basic residues predominate over residues 756–765 (GSFRGRRGVR).

The protein belongs to the adenoviridae shutoff protein family. In terms of assembly, monomer. Interacts with hexon protein; this interaction allows chaperoning and trimerization of hexon proteins. Interacts (via N-terminus) with host initiation factor EIF4G (via C-terminus). Interacts (via RRM domain) with viral mRNAs that contain the tripartite leader; this interaction allows ribosome shunting and expression of viral late mRNAs. Might be cleaved by the viral protease. Post-translationally, phosphorylated. Tyrosine phosphorylation enhances preferential binding to tripartite leader mRNAs and allows ribosome shunting. In terms of processing, methylated. Asymmetric dimethylation by host PRMT1 of the Arg/Gly-rich region may regulate shutoff protein binding to hexon and promote the capsid assembly in the nucleus.

It localises to the host cytoplasm. Protein that inhibits host translation while promoting late viral translation by ribosome shunting. Blocks host cap-dependent translation by binding to eIF4G, displacing MKNK1 from cap initiation complexes and preventing EIF4E phosphorylation. Binds to the tripartite leader sequence of viral late mRNAs and recruits host eIF4G, PABPC1/poly-A binding protein and 40S ribosomes subunits on viral mRNAs, allowing ribosome shunting and efficient translation of late viral mRNAs even though conventional translation via ribosome scanning from the cap has been shut off in the host cell. During assembly, acts as a chaperone protein that helps hexon proteins assembly into trimers. This Homo sapiens (Human) protein is Shutoff protein.